Here is a 436-residue protein sequence, read N- to C-terminus: Na(+)/H(+) antiporter NhaA 1 (436 aa).

Helical transmembrane passes span 35–55, 80–100, 116–136, 147–167, 176–196, 201–221, 226–246, 283–303, 313–333, 354–374, and 385–405; these read FGGGLLLLGAVIALVWANSPW, LATWAADGLLAIFFFVVGLEL, ALPVIAAIGGMIVPALIYVGV, GWAIPTATDIAFALAVLAVIG, AFLLTLAVVDDLLAITVIAIF, FKLTPLLLALLPIALFGLLVQ, WWWALIPLAVVAWTLVHESGV, VSAGFAVPVFAFFAAGVSLRG, PIVVGIVAGLVLGKVLGIFGS, LLGVSLLAGIGFTVSLLIGEL, and VKAAVLTGSLIAALLASIVLI.

This sequence belongs to the NhaA Na(+)/H(+) (TC 2.A.33) antiporter family.

The protein localises to the cell membrane. It catalyses the reaction Na(+)(in) + 2 H(+)(out) = Na(+)(out) + 2 H(+)(in). Functionally, na(+)/H(+) antiporter that extrudes sodium in exchange for external protons. This chain is Na(+)/H(+) antiporter NhaA 1, found in Salinispora tropica (strain ATCC BAA-916 / DSM 44818 / JCM 13857 / NBRC 105044 / CNB-440).